A 572-amino-acid polypeptide reads, in one-letter code: Cytochrome P450 monooxygenase xilC (572 aa).

Heme is bound at residue cysteine 515.

Belongs to the cytochrome P450 family. The cofactor is heme.

It participates in secondary metabolite biosynthesis. Functionally, cytochrome P450 monooxygenase; part of the gene cluster that mediates the biosynthesis of the 6-methyl-2-pyrone derivative xylariolide D. XilC hydroxylates the 5-alkyl-6-methyl-2-pyrone backbone called prexylariolide D, produced by the highly reducing polyketide synthase xilA, on its side chain to form xylariolide D. The sequence is that of Cytochrome P450 monooxygenase xilC from Penicillium rubens (strain ATCC 28089 / DSM 1075 / NRRL 1951 / Wisconsin 54-1255) (Penicillium chrysogenum).